The sequence spans 454 residues: CBL-interacting protein kinase 4 (454 aa).

Positions 25–284 (YELGRMLGRG…ESLAAHHPWF (260 aa)) constitute a Protein kinase domain. Residues 31–39 (LGRGTFAKV) and Lys-54 contribute to the ATP site. The Proton acceptor role is filled by Asp-151. The segment at 169–198 (DFGLAALPDTLRDDGRLHTACGTPAYAAPE) is activation loop. An NAF domain is found at 311–335 (APPPPLNAFDIISMSPGLDLSGLFG). The PPI stretch occupies residues 341 to 370 (LREKRFTTTASPEKTLEQLGLAGGKLGYVV).

Belongs to the protein kinase superfamily. CAMK Ser/Thr protein kinase family. SNF1 subfamily. Mn(2+) serves as cofactor.

It catalyses the reaction L-seryl-[protein] + ATP = O-phospho-L-seryl-[protein] + ADP + H(+). It carries out the reaction L-threonyl-[protein] + ATP = O-phospho-L-threonyl-[protein] + ADP + H(+). CIPK serine-threonine protein kinases interact with CBL proteins. Binding of a CBL protein to the regulatory NAF domain of CIPK protein lead to the activation of the kinase in a calcium-dependent manner. The protein is CBL-interacting protein kinase 4 (CIPK4) of Oryza sativa subsp. japonica (Rice).